Here is a 439-residue protein sequence, read N- to C-terminus: MDICSRNKKLTIRRPAILVALALLLCSCKSTPPESMVTPPAGSKPPATTQQSSQPMRGIWLATVSRLDWPPVSSVNISNPTSRARVQQQAMIDKLDHLQRLGINTVFFQVKPDGTALWPSKILPWSDLMTGKIGENPGYDPLQFMLDEAHKRGMKVHAWFNPYRVSVNTKPGTIRELNSTLSQQPASVYVQHRDWIRTSGDRFVLDPGIPEVQDWITSIVAEVVSRYPVDGVQFDDYFYTESPGSRLNDNETYRKYGGAFASKADWRRNNTQQLIAKVSHTIKSIKPGVEFGVSPAGVWRNRSHDPLGSDTRGAAAYDESYADTRRWVEQGLLDYIAPQIYWPFSRSAARYDVLAKWWADVVKPTRTRLYIGIAFYKVGEPSKIEPDWMINGGVPELKKQLDLNDAVPEISGTILFREDYLNKPQTQQAVSYLQSRWGS.

Residues 1–27 (MDICSRNKKLTIRRPAILVALALLLCS) form the signal peptide. Cys28 carries N-palmitoyl cysteine lipidation. Residue Cys28 is the site of S-diacylglycerol cysteine attachment. The segment at 34 to 54 (ESMVTPPAGSKPPATTQQSSQ) is disordered.

The protein belongs to the glycosyl hydrolase-like 10 (GHL10) family.

It localises to the cell outer membrane. Functionally, divisome-localized glycosyl hydrolase that cleaves peptide-free (denuded) peptidoglycans. The sequence is that of Glycosyl hydrolase DigH from Escherichia coli O157:H7.